Reading from the N-terminus, the 881-residue chain is Leucine--tRNA ligase (881 aa).

The 'HIGH' region signature appears at 48-58 (PYPSGKLHMGH). A 'KMSKS' region motif is present at residues 638-642 (KMSKS). Lys641 lines the ATP pocket.

It belongs to the class-I aminoacyl-tRNA synthetase family.

Its subcellular location is the cytoplasm. The catalysed reaction is tRNA(Leu) + L-leucine + ATP = L-leucyl-tRNA(Leu) + AMP + diphosphate. This chain is Leucine--tRNA ligase, found in Janthinobacterium sp. (strain Marseille) (Minibacterium massiliensis).